Reading from the N-terminus, the 245-residue chain is 2,3-bisphosphoglycerate-dependent phosphoglycerate mutase (245 aa).

Substrate is bound by residues 8-15 (RHGQSLWN), 21-22 (TG), Arg-60, 87-90 (ERHY), Lys-98, 114-115 (RR), and 183-184 (GN). His-9 acts as the Tele-phosphohistidine intermediate in catalysis. Glu-87 (proton donor/acceptor) is an active-site residue.

Belongs to the phosphoglycerate mutase family. BPG-dependent PGAM subfamily.

The catalysed reaction is (2R)-2-phosphoglycerate = (2R)-3-phosphoglycerate. The protein operates within carbohydrate degradation; glycolysis; pyruvate from D-glyceraldehyde 3-phosphate: step 3/5. Catalyzes the interconversion of 2-phosphoglycerate and 3-phosphoglycerate. This chain is 2,3-bisphosphoglycerate-dependent phosphoglycerate mutase, found in Bacillus cereus (strain B4264).